The sequence spans 27 residues: Dermaseptin-S4 (27 aa).

Belongs to the frog skin active peptide (FSAP) family. Dermaseptin subfamily. As to quaternary structure, monomer and oligomer. Forms aggregates in aqueous environments. Expressed by the skin glands.

It is found in the secreted. Potent antimicrobial peptide with activity against bacteria and protozoa. Also has activity against fungi. Also shows activity against enveloped herpes simplex virus type 1. Probably acts by disturbing membrane functions with its amphipathic structure. Binds to healthy erythrocytes (this binding is receptor independent), and has strong hemolytic activity. Does not bind to P.falciparum infected erythrocytes, but accumulates within the parasite. Kills the parasite, and only at high concentrations has a hemolytic activity on the host cell. In vitro, shows high spermicidal activities. The polypeptide is Dermaseptin-S4 (Phyllomedusa sauvagei (Sauvage's leaf frog)).